The following is a 327-amino-acid chain: Cytochrome f (327 aa).

Residues 1–24 (MKRIGLVFCALLLLLGMGARPAAA) form the signal peptide. 4 residues coordinate heme: Y25, C45, C48, and H49. A helical membrane pass occupies residues 293-313 (VKWLVAFLAAITITQVLLVLK).

Belongs to the cytochrome f family. In terms of assembly, the 4 large subunits of the cytochrome b6-f complex are cytochrome b6, subunit IV (17 kDa polypeptide, PetD), cytochrome f and the Rieske protein, while the 4 small subunits are PetG, PetL, PetM and PetN. The complex functions as a dimer. Heme is required as a cofactor.

It is found in the cellular thylakoid membrane. In terms of biological role, component of the cytochrome b6-f complex, which mediates electron transfer between photosystem II (PSII) and photosystem I (PSI), cyclic electron flow around PSI, and state transitions. The chain is Cytochrome f from Synechococcus sp. (strain JA-2-3B'a(2-13)) (Cyanobacteria bacterium Yellowstone B-Prime).